A 77-amino-acid polypeptide reads, in one-letter code: U8-lycotoxin-Ls1g (77 aa).

Residues Met-1–Val-20 form the signal peptide. The propeptide occupies Gln-21–Arg-26.

The protein belongs to the neurotoxin 19 (CSTX) family. 08 (U8-Lctx) subfamily. In terms of processing, contains 4 disulfide bonds. In terms of tissue distribution, expressed by the venom gland.

It localises to the secreted. This chain is U8-lycotoxin-Ls1g, found in Lycosa singoriensis (Wolf spider).